Here is a 189-residue protein sequence, read N- to C-terminus: UPF0301 protein RAF_ORF0041 (189 aa).

This sequence belongs to the UPF0301 (AlgH) family.

The chain is UPF0301 protein RAF_ORF0041 from Rickettsia africae (strain ESF-5).